Consider the following 443-residue polypeptide: Tol-Pal system protein TolB (443 aa).

An N-terminal signal peptide occupies residues 1–33 (MKIGIINTKIRTVFSAFACMIAASLVCTMPARA).

This sequence belongs to the TolB family. In terms of assembly, the Tol-Pal system is composed of five core proteins: the inner membrane proteins TolA, TolQ and TolR, the periplasmic protein TolB and the outer membrane protein Pal. They form a network linking the inner and outer membranes and the peptidoglycan layer.

It localises to the periplasm. In terms of biological role, part of the Tol-Pal system, which plays a role in outer membrane invagination during cell division and is important for maintaining outer membrane integrity. The chain is Tol-Pal system protein TolB from Brucella suis (strain ATCC 23445 / NCTC 10510).